The following is a 189-amino-acid chain: Protein GrpE (189 aa).

Residues 1–22 (MKEQQKETEQNIEEINDETVTE) form a disordered region. Residues 10–22 (QNIEEINDETVTE) show a composition bias toward acidic residues.

The protein belongs to the GrpE family. In terms of assembly, homodimer.

The protein resides in the cytoplasm. In terms of biological role, participates actively in the response to hyperosmotic and heat shock by preventing the aggregation of stress-denatured proteins, in association with DnaK and GrpE. It is the nucleotide exchange factor for DnaK and may function as a thermosensor. Unfolded proteins bind initially to DnaJ; upon interaction with the DnaJ-bound protein, DnaK hydrolyzes its bound ATP, resulting in the formation of a stable complex. GrpE releases ADP from DnaK; ATP binding to DnaK triggers the release of the substrate protein, thus completing the reaction cycle. Several rounds of ATP-dependent interactions between DnaJ, DnaK and GrpE are required for fully efficient folding. The protein is Protein GrpE of Leuconostoc citreum (strain KM20).